We begin with the raw amino-acid sequence, 241 residues long: Phosphoadenosine 5'-phosphosulfate reductase (241 aa).

Residue Cys235 is the Nucleophile; cysteine thiosulfonate intermediate of the active site.

It belongs to the PAPS reductase family. CysH subfamily.

It localises to the cytoplasm. It carries out the reaction [thioredoxin]-disulfide + sulfite + adenosine 3',5'-bisphosphate + 2 H(+) = [thioredoxin]-dithiol + 3'-phosphoadenylyl sulfate. Its pathway is sulfur metabolism; hydrogen sulfide biosynthesis; sulfite from sulfate: step 3/3. Its function is as follows. Catalyzes the formation of sulfite from phosphoadenosine 5'-phosphosulfate (PAPS) using thioredoxin as an electron donor. The polypeptide is Phosphoadenosine 5'-phosphosulfate reductase (Xanthomonas euvesicatoria pv. vesicatoria (strain 85-10) (Xanthomonas campestris pv. vesicatoria)).